Here is a 309-residue protein sequence, read N- to C-terminus: UPF0276 protein RB0508 (309 aa).

It belongs to the UPF0276 family.

The polypeptide is UPF0276 protein RB0508 (Rhizobium meliloti (strain 1021) (Ensifer meliloti)).